A 209-amino-acid chain; its full sequence is Thymidine kinase (209 aa).

Residues 9-16 (AAMNAGKS) and 88-91 (DEAQ) each bind ATP. Catalysis depends on glutamate 89, which acts as the Proton acceptor. Residues cysteine 146, cysteine 148, cysteine 183, and histidine 186 each contribute to the Zn(2+) site.

Belongs to the thymidine kinase family. In terms of assembly, homotetramer.

The protein localises to the cytoplasm. The enzyme catalyses thymidine + ATP = dTMP + ADP + H(+). The sequence is that of Thymidine kinase from Legionella pneumophila subsp. pneumophila (strain Philadelphia 1 / ATCC 33152 / DSM 7513).